The primary structure comprises 194 residues: Putative manganese efflux pump MntP (194 aa).

6 helical membrane-spanning segments follow: residues 8–28 (LLAI…GIIL), 36–56 (MLIM…LGWL), 61–81 (FSHL…AFLG), 109–129 (MAVA…FLGI), 138–158 (PAGI…IFGI), and 172–192 (LWGG…HLFF).

The protein belongs to the MntP (TC 9.B.29) family.

The protein localises to the cell inner membrane. Probably functions as a manganese efflux pump. The sequence is that of Putative manganese efflux pump MntP from Bacteroides fragilis (strain ATCC 25285 / DSM 2151 / CCUG 4856 / JCM 11019 / LMG 10263 / NCTC 9343 / Onslow / VPI 2553 / EN-2).